Reading from the N-terminus, the 254-residue chain is Protein EFFECTOR OF TRANSCRIPTION 3 (254 aa).

One can recognise a GIY-YIG domain in the interval 103–152 (RCTGLYELGVGVIGQDQGQNFDPDNNVLGVYVGQCVDVKSRLQDYGRRGG).

The protein resides in the cytoplasm. This chain is Protein EFFECTOR OF TRANSCRIPTION 3, found in Arabidopsis thaliana (Mouse-ear cress).